Reading from the N-terminus, the 857-residue chain is Major vault protein (857 aa).

MVP repeat units follow at residues 18–60, 62–122, 123–174, 175–227, 228–282, 284–332, 333–387, and 388–441; these read PYYY…ITIP, RHYC…KVVQ, ANAA…TIIR, PNQA…YVLT, EKNA…NTLT, RQYC…FILG, EDEG…IPLD, and ENEG…VAER. Positions 434 to 453 are disordered; that stretch reads AKDPVAERSDRRGDRAAPRA. A compositionally biased stretch (basic and acidic residues) spans 437 to 453; that stretch reads PVAERSDRRGDRAAPRA. The IQ domain occupies 665 to 694; it reads ARHEAERLEQEARGRLERQKIMDEAEAEKS.

As to quaternary structure, the vault ribonucleoprotein particle is a huge (400 A x 670 A) cage structure of 12.9 MDa. It consists of a dimer of half-vaults, with each half-vault comprising 39 identical major vault protein (MVP) chains, PARP4 and one or more vault RNAs (vRNAs). As to expression, expressed in embryos, tube feet and coelomocytes (at protein level). Not expressed in sperm cells (at protein level).

The protein localises to the cytoplasm. It is found in the nucleus. Its function is as follows. Required for normal vault structure. Vaults are multi-subunit structures that may act as scaffolds for proteins involved in signal transduction. Vaults may also play a role in nucleo-cytoplasmic transport. The chain is Major vault protein from Strongylocentrotus purpuratus (Purple sea urchin).